We begin with the raw amino-acid sequence, 148 residues long: Nucleoside diphosphate kinase B (148 aa).

ATP-binding residues include Lys-9, Phe-57, Arg-85, Thr-91, Arg-102, and Asn-112. His-115 (pros-phosphohistidine intermediate) is an active-site residue.

Belongs to the NDK family. Mg(2+) serves as cofactor.

The enzyme catalyses a 2'-deoxyribonucleoside 5'-diphosphate + ATP = a 2'-deoxyribonucleoside 5'-triphosphate + ADP. It carries out the reaction a ribonucleoside 5'-diphosphate + ATP = a ribonucleoside 5'-triphosphate + ADP. In terms of biological role, major role in the synthesis of nucleoside triphosphates other than ATP. The ATP gamma phosphate is transferred to the NDP beta phosphate via a ping-pong mechanism, using a phosphorylated active-site intermediate. This is Nucleoside diphosphate kinase B from Flaveria bidentis (Coastal plain yellowtops).